Here is a 215-residue protein sequence, read N- to C-terminus: Ribosomal RNA small subunit methyltransferase G (215 aa).

S-adenosyl-L-methionine-binding positions include Gly-77, Phe-82, 130–131, and Arg-146; that span reads IE.

The protein belongs to the methyltransferase superfamily. RNA methyltransferase RsmG family.

The protein localises to the cytoplasm. It carries out the reaction guanosine(527) in 16S rRNA + S-adenosyl-L-methionine = N(7)-methylguanosine(527) in 16S rRNA + S-adenosyl-L-homocysteine. Its function is as follows. Specifically methylates the N7 position of guanine in position 527 of 16S rRNA. This chain is Ribosomal RNA small subunit methyltransferase G, found in Bartonella bacilliformis (strain ATCC 35685 / KC583 / Herrer 020/F12,63).